Here is a 133-residue protein sequence, read N- to C-terminus: Secretin (133 aa).

Residues 1–22 (MEPPLPTPMLLLLLLLLSSSAA) form the signal peptide. The propeptide occupies 23–30 (LPAPPRTP). V58 bears the Valine amide mark. Residue S62 is modified to Phosphoserine. Positions 62–133 (SEQDTENIPE…EWTETTRPPR (72 aa)) are excised as a propeptide.

It belongs to the glucagon family. As to expression, highly expressed in the intestine. Also expressed in the hippocampus, cerebellum and the brain stem in adult mouse brain. In the hippocampus, expressed in the dentate gyrus, the hilus and the molecular layer.

The protein localises to the secreted. Its function is as follows. Hormone involved in different processes, such as regulation of the pH of the duodenal content, food intake and water homeostasis. Exerts its biological effects by binding to secretin receptor (SCTR), a G-protein coupled receptor expressed in the basolateral domain of several cells. Acts as a key gastrointestinal hormone by regulating the pH of the duodenal content. Secreted by S cells of the duodenum in the crypts of Lieberkuehn and regulates the pH of the duodenum by (1) inhibiting the secretion of gastric acid from the parietal cells of the stomach and (2) stimulating the production of bicarbonate (NaHCO(3)) from the ductal cells of the pancreas. Production of bicarbonate is essential to neutralize the pH and ensure no damage is done to the small intestine by the gastric acid. In addition to regulating the pH of the duodenal content, plays a central role in diet induced thermogenesis: acts as a non-sympathetic brown fat (BAT) activator mediating prandial thermogenesis, which consequentially induces satiation. Mechanistically, secretin released by the gut after a meal binds to secretin receptor (SCTR) in brown adipocytes, activating brown fat thermogenesis by stimulating lipolysis, which is sensed in the brain and promotes satiation. Also able to stimulate lipolysis in white adipocytes. Also plays an important role in cellular osmoregulation: released into the systemic circulation in response to hyperosmolality and acts at different levels in the hypothalamus, pituitary and kidney to regulate water homeostasis. Also plays a role in the central nervous system, possibly by acting as a neuropeptide hormone: required for hippocampal synaptic function and neural progenitor cells maintenance. This is Secretin from Mus musculus (Mouse).